We begin with the raw amino-acid sequence, 151 residues long: MVAIRVIRDAGADTQVPLPSYETTGAAGADIRANLPDRGSLTLAPGGRALIPTGLRVEIPAGYEIQIRPRSGLALKHGITLPNTPGTIDSDYRGPLGVILLNAGAEPFEVVHGERIAQLVVAPVVQARFELTEALGETERGAGGFGSTGRG.

Substrate-binding positions include arginine 70–glycine 72, asparagine 83, and threonine 87–aspartate 89.

The protein belongs to the dUTPase family. Mg(2+) serves as cofactor.

It carries out the reaction dUTP + H2O = dUMP + diphosphate + H(+). It functions in the pathway pyrimidine metabolism; dUMP biosynthesis; dUMP from dCTP (dUTP route): step 2/2. Functionally, this enzyme is involved in nucleotide metabolism: it produces dUMP, the immediate precursor of thymidine nucleotides and it decreases the intracellular concentration of dUTP so that uracil cannot be incorporated into DNA. This chain is Deoxyuridine 5'-triphosphate nucleotidohydrolase, found in Ruegeria pomeroyi (strain ATCC 700808 / DSM 15171 / DSS-3) (Silicibacter pomeroyi).